The following is a 198-amino-acid chain: uncharacterized protein (198 aa).

Residues 51–74 (EEPDNGDDRGSRRTTGQGRKWAAH) are disordered.

This is an uncharacterized protein from Homo sapiens (Human).